A 183-amino-acid polypeptide reads, in one-letter code: Casparian strip membrane protein 2 (183 aa).

Over 1–23 the chain is Cytoplasmic; it reads MDSGEQGETSKAPLNKGVSRGVS. A helical transmembrane segment spans residues 24-44; it reads ILDLILRVIAVISTLASAIAM. Topologically, residues 45-71 are extracellular; sequence GTTNETLPLFTPFIQFKARYSDLPALT. N-linked (GlcNAc...) asparagine glycosylation is present at Asn-48. Residues 72-92 form a helical membrane-spanning segment; that stretch reads FFVVANSIVSAYLILSLPLSI. Over 93–104 the chain is Cytoplasmic; sequence AHIIRSGAKYSR. Residues 105–125 form a helical membrane-spanning segment; it reads LVLIIFDAAMLALVTAASSAA. The Extracellular portion of the chain corresponds to 126 to 158; that stretch reads TAIVYLAHKGNVRANWLAICQQLDSFCERTSGS. Residues 159-179 form a helical membrane-spanning segment; the sequence is LVGSFGAMVLLILLILLSAMA. Topologically, residues 180–183 are cytoplasmic; that stretch reads LARR.

Belongs to the Casparian strip membrane proteins (CASP) family. Homodimer and heterodimers.

It is found in the cell membrane. Regulates membrane-cell wall junctions and localized cell wall deposition. Required for establishment of the Casparian strip membrane domain (CSD) and the subsequent formation of Casparian strips, a cell wall modification of the root endodermis that determines an apoplastic barrier between the intraorganismal apoplasm and the extraorganismal apoplasm and prevents lateral diffusion. This Triticum aestivum (Wheat) protein is Casparian strip membrane protein 2.